A 118-amino-acid chain; its full sequence is Small ribosomal subunit protein bS6 (118 aa).

The segment at 98 to 118 (TAAPAAKVAPVETAPAAEAAE) is disordered. The span at 99-118 (AAPAAKVAPVETAPAAEAAE) shows a compositional bias: low complexity.

This sequence belongs to the bacterial ribosomal protein bS6 family.

Its function is as follows. Binds together with bS18 to 16S ribosomal RNA. The sequence is that of Small ribosomal subunit protein bS6 from Geobacter metallireducens (strain ATCC 53774 / DSM 7210 / GS-15).